The chain runs to 341 residues: Methionine import ATP-binding protein MetN 1 (341 aa).

One can recognise an ABC transporter domain in the interval 2-241; that stretch reads IEFRQVSKTF…PKTTIAQNFV (240 aa). Position 38–45 (38–45) interacts with ATP; that stretch reads GYSGAGKS.

It belongs to the ABC transporter superfamily. Methionine importer (TC 3.A.1.24) family. The complex is composed of two ATP-binding proteins (MetN), two transmembrane proteins (MetI) and a solute-binding protein (MetQ).

Its subcellular location is the cell membrane. It catalyses the reaction L-methionine(out) + ATP + H2O = L-methionine(in) + ADP + phosphate + H(+). The catalysed reaction is D-methionine(out) + ATP + H2O = D-methionine(in) + ADP + phosphate + H(+). In terms of biological role, part of the ABC transporter complex MetNIQ involved in methionine import. Responsible for energy coupling to the transport system. This Staphylococcus aureus (strain USA300) protein is Methionine import ATP-binding protein MetN 1.